We begin with the raw amino-acid sequence, 85 residues long: Kunitz-type serine protease inhibitor homolog beta-bungarotoxin B3 chain (85 aa).

Residues M1–S24 form the signal peptide. Residues C31–C81 form the BPTI/Kunitz inhibitor domain. 3 cysteine pairs are disulfide-bonded: C31–C81, C40–C64, and C56–C77.

The protein belongs to the venom Kunitz-type family. As to quaternary structure, heterodimer; disulfide-linked. The A chain has phospholipase A2 activity and the B chain shows homology with the basic protease inhibitors. Expressed by the venom gland.

It is found in the secreted. Its function is as follows. Beta-bungarotoxin is a presynaptic neurotoxin of the venom. The B chain is homologous to venom basic protease inhibitors but has no protease inhibitor activity and is non-toxic. This is Kunitz-type serine protease inhibitor homolog beta-bungarotoxin B3 chain from Bungarus candidus (Malayan krait).